We begin with the raw amino-acid sequence, 925 residues long: Leucine--tRNA ligase (925 aa).

The short motif at 40-51 (PYPSGAGLHVGH) is the 'HIGH' region element. Residues 700 to 704 (KMSKS) carry the 'KMSKS' region motif. An ATP-binding site is contributed by K703.

It belongs to the class-I aminoacyl-tRNA synthetase family.

It is found in the cytoplasm. It catalyses the reaction tRNA(Leu) + L-leucine + ATP = L-leucyl-tRNA(Leu) + AMP + diphosphate. The protein is Leucine--tRNA ligase of Porphyromonas gingivalis (strain ATCC 33277 / DSM 20709 / CIP 103683 / JCM 12257 / NCTC 11834 / 2561).